We begin with the raw amino-acid sequence, 581 residues long: MKSHIESLLEQTIESFKQQGIVPADFQARIQVDRTKDKSHGDLATNLAMMLTKVAKKNPRELAQLIIDTLPASSYVAKVEIAGPGFINFFIDDNALANQLQQALTSDHLGVALPTKQTIVVDYSSPNLAKEMHVGHLRSTIIGDSVVRALEYLGHNVIRQNHVGDWGTQFGMLLALMEELRAANGEQAKMELSDLESFYRAAKVRFDESTEFATRARQLVVALQSGDEYCNKLWREFNDISLSHCHDVYKRLGVSLTRADVHGESAYNADLAQVVKDLDAQGLLSESNGAKVVFQEAFRNKEGEPLPVIIQKADGGYLYATSDLAAMRYRSNVLKADRAMYFVDLRQALHFQQVFSLAKLAKFVRPEMSLEHTGFGTMNGEDGRPFKTRSGGVVKLVDLLDEADVRALELVRSKNPDMDEATLTEIARVVGISSVKYADLSKNRTSDYIFSFEQMLSFEGNTAPYLLYAYTRVAGIFKRATDIDLSQAKIVLEHEKEKDLGTKLAQFGEVLTRMTDKGLPHVLCGYLYELASEFSSFYEACPVLAAETEAQKQSRLLLAQLTAKTLKTGLSLLGIETLERM.

Positions 126 to 136 (PNLAKEMHVGH) match the 'HIGH' region motif.

Belongs to the class-I aminoacyl-tRNA synthetase family. As to quaternary structure, monomer.

It localises to the cytoplasm. The catalysed reaction is tRNA(Arg) + L-arginine + ATP = L-arginyl-tRNA(Arg) + AMP + diphosphate. The sequence is that of Arginine--tRNA ligase from Shewanella frigidimarina (strain NCIMB 400).